The chain runs to 507 residues: ATP synthase subunit alpha, chloroplastic (507 aa).

170-177 contacts ATP; the sequence is GDRQTGKT.

The protein belongs to the ATPase alpha/beta chains family. As to quaternary structure, F-type ATPases have 2 components, CF(1) - the catalytic core - and CF(0) - the membrane proton channel. CF(1) has five subunits: alpha(3), beta(3), gamma(1), delta(1), epsilon(1). CF(0) has four main subunits: a, b, b' and c.

The protein resides in the plastid. The protein localises to the chloroplast thylakoid membrane. It carries out the reaction ATP + H2O + 4 H(+)(in) = ADP + phosphate + 5 H(+)(out). Functionally, produces ATP from ADP in the presence of a proton gradient across the membrane. The alpha chain is a regulatory subunit. In Cucumis sativus (Cucumber), this protein is ATP synthase subunit alpha, chloroplastic.